The primary structure comprises 329 residues: 4-hydroxythreonine-4-phosphate dehydrogenase (329 aa).

Substrate is bound by residues H136 and T137. A divalent metal cation contacts are provided by H166, H211, and H266. Substrate-binding residues include K274, N283, and R292.

It belongs to the PdxA family. In terms of assembly, homodimer. Requires Zn(2+) as cofactor. Mg(2+) serves as cofactor. The cofactor is Co(2+).

It is found in the cytoplasm. The enzyme catalyses 4-(phosphooxy)-L-threonine + NAD(+) = 3-amino-2-oxopropyl phosphate + CO2 + NADH. The protein operates within cofactor biosynthesis; pyridoxine 5'-phosphate biosynthesis; pyridoxine 5'-phosphate from D-erythrose 4-phosphate: step 4/5. In terms of biological role, catalyzes the NAD(P)-dependent oxidation of 4-(phosphooxy)-L-threonine (HTP) into 2-amino-3-oxo-4-(phosphooxy)butyric acid which spontaneously decarboxylates to form 3-amino-2-oxopropyl phosphate (AHAP). This chain is 4-hydroxythreonine-4-phosphate dehydrogenase, found in Pseudomonas syringae pv. tomato (strain ATCC BAA-871 / DC3000).